The sequence spans 168 residues: Cell division inhibitor SulA (168 aa).

The disordered stretch occupies residues 1 to 20; sequence MSTQSVSSHNIESSSFSANQ. The tract at residues 105 to 111 is ftsZ binding; it reads ALLTGNY. Positions 161 to 168 are lon protease binding; sequence KIHSTLYH.

Belongs to the SulA family. In terms of assembly, interacts with FtsZ. In terms of processing, is rapidly cleaved and degraded by the Lon protease once DNA damage is repaired.

Component of the SOS system and an inhibitor of cell division. Accumulation of SulA causes rapid cessation of cell division and the appearance of long, non-septate filaments. In the presence of GTP, binds a polymerization-competent form of FtsZ in a 1:1 ratio, thus inhibiting FtsZ polymerization and therefore preventing it from participating in the assembly of the Z ring. This mechanism prevents the premature segregation of damaged DNA to daughter cells during cell division. The polypeptide is Cell division inhibitor SulA (Pectobacterium atrosepticum (strain SCRI 1043 / ATCC BAA-672) (Erwinia carotovora subsp. atroseptica)).